We begin with the raw amino-acid sequence, 57 residues long: Large ribosomal subunit protein bL32 (57 aa).

It belongs to the bacterial ribosomal protein bL32 family.

This is Large ribosomal subunit protein bL32 from Streptomyces griseus subsp. griseus (strain JCM 4626 / CBS 651.72 / NBRC 13350 / KCC S-0626 / ISP 5235).